Reading from the N-terminus, the 381-residue chain is 1-deoxy-D-xylulose 5-phosphate reductoisomerase (381 aa).

Residues glycine 13, serine 14, isoleucine 15, asparagine 40, and asparagine 114 each contribute to the NADPH site. Lysine 115 is a 1-deoxy-D-xylulose 5-phosphate binding site. Glutamate 116 is an NADPH binding site. Aspartate 140 provides a ligand contact to Mn(2+). The 1-deoxy-D-xylulose 5-phosphate site is built by serine 141, glutamate 142, serine 166, and histidine 189. Glutamate 142 serves as a coordination point for Mn(2+). Glycine 195 lines the NADPH pocket. 1-deoxy-D-xylulose 5-phosphate is bound by residues serine 202, asparagine 207, lysine 208, and glutamate 211. Glutamate 211 serves as a coordination point for Mn(2+).

This sequence belongs to the DXR family. The cofactor is Mg(2+). It depends on Mn(2+) as a cofactor.

The enzyme catalyses 2-C-methyl-D-erythritol 4-phosphate + NADP(+) = 1-deoxy-D-xylulose 5-phosphate + NADPH + H(+). It participates in isoprenoid biosynthesis; isopentenyl diphosphate biosynthesis via DXP pathway; isopentenyl diphosphate from 1-deoxy-D-xylulose 5-phosphate: step 1/6. Catalyzes the NADPH-dependent rearrangement and reduction of 1-deoxy-D-xylulose-5-phosphate (DXP) to 2-C-methyl-D-erythritol 4-phosphate (MEP). This chain is 1-deoxy-D-xylulose 5-phosphate reductoisomerase, found in Treponema denticola (strain ATCC 35405 / DSM 14222 / CIP 103919 / JCM 8153 / KCTC 15104).